We begin with the raw amino-acid sequence, 209 residues long: GTP-binding nuclear protein Ran1B (209 aa).

Positions 1–162 constitute a Small GTPase Ran-type domain; that stretch reads NFKLVIVGDG…LYLARKLAGD (162 aa). 9–16 lines the GTP pocket; that stretch reads DGGTGKTT. Residues 28-36 form a switch-I region; that stretch reads KKYEPTIGV. Residues G59, 113–116, and 141–143 each bind GTP; these read NKVD and SAK. The interval 59 to 75 is switch-II; it reads GQEKFGGLRDGYYIHGQ. Residues 187–200 are compositionally biased toward low complexity; sequence QHEAELAAAASQPL. Residues 187–209 form a disordered region; the sequence is QHEAELAAAASQPLPDDDDDAFD.

It belongs to the small GTPase superfamily. Ran family. As to quaternary structure, found in a nuclear export complex with RanGTP, exportin and pre-miRNA.

The protein resides in the nucleus. In terms of biological role, GTP-binding protein involved in nucleocytoplasmic transport. Required for the import of protein into the nucleus and also for RNA export. Involved in chromatin condensation and control of cell cycle. This is GTP-binding nuclear protein Ran1B (RAN1B) from Lotus japonicus (Lotus corniculatus var. japonicus).